The primary structure comprises 280 residues: Bis(5'-nucleosyl)-tetraphosphatase, symmetrical (280 aa).

It belongs to the Ap4A hydrolase family.

The catalysed reaction is P(1),P(4)-bis(5'-adenosyl) tetraphosphate + H2O = 2 ADP + 2 H(+). Functionally, hydrolyzes diadenosine 5',5'''-P1,P4-tetraphosphate to yield ADP. The sequence is that of Bis(5'-nucleosyl)-tetraphosphatase, symmetrical from Paracidovorax citrulli (strain AAC00-1) (Acidovorax citrulli).